The following is a 183-amino-acid chain: Ferredoxin-2, mitochondrial (183 aa).

Residues 1-52 (MAASVAWGGVNAGFLLRAARGAWWSRPGGFWGSGEAAAPAIARKFRATGSRP) constitute a mitochondrion transit peptide. In terms of domain architecture, 2Fe-2S ferredoxin-type spans 68–170 (VNVVFVDRSG…GAEFTLPKIT (103 aa)). Residues Cys-105, Cys-111, Cys-114, and Cys-151 each coordinate [2Fe-2S] cluster.

Belongs to the adrenodoxin/putidaredoxin family. Component of the mitochondrial core iron-sulfur cluster (ISC) complex composed of NFS1, LYRM4, NDUFAB1, ISCU, FXN, and FDX2; this complex is a heterohexamer containing two copies of each monomer. Form a heterodimer complex with NFS1. Interacts (in both their reduced and oxidized states) with the cysteine desulfurase (NFS1:LYRM4) complex; this interaction stimulates cysteine desulfurase activity, and serves as a reductant for Fe-S cluster assembly. [2Fe-2S] cluster is required as a cofactor.

It localises to the mitochondrion. The protein resides in the mitochondrion matrix. In terms of biological role, electron donor, of the core iron-sulfur cluster (ISC) assembly complex, that acts to reduce the persulfide into sulfide during [2Fe-2S] clusters assembly on the scaffolding protein ISCU. The core iron-sulfur cluster (ISC) assembly complex is involved in the de novo synthesis of a [2Fe-2S] cluster, the first step of the mitochondrial iron-sulfur protein biogenesis. This process is initiated by the cysteine desulfurase complex (NFS1:LYRM4:NDUFAB1) that produces persulfide which is delivered on the scaffold protein ISCU in a FXN-dependent manner. Then this complex is stabilized by FDX2 which provides reducing equivalents to accomplish the [2Fe-2S] cluster assembly. Finally, the [2Fe-2S] cluster is transferred from ISCU to chaperone proteins, including HSCB, HSPA9 and GLRX5. Essential for coenzyme Q biosynthesis: together with FDXR, transfers the electrons required for the hydroxylation reaction performed by COQ6. The polypeptide is Ferredoxin-2, mitochondrial (Bos taurus (Bovine)).